The chain runs to 352 residues: Transcription factor MYB51 (352 aa).

HTH myb-type domains follow at residues 10–62 (ELGL…ANYL) and 63–117 (RPDI…KKRL). 2 DNA-binding regions (H-T-H motif) span residues 38 to 62 (WRTL…ANYL) and 90 to 113 (WSAI…NTHI). Disordered regions lie at residues 128 to 157 (KGIT…DLDN) and 198 to 219 (GGPL…SVDS). Residues 203–219 (STSHTTNTTTTSVSVDS) are compositionally biased toward low complexity.

Can form complexes with MYC2, MYC3 or MYC4. As to expression, expressed in vegetative parts of the plant, mainly in mature rosette leaves and in trichomes. Detected in roots, but not in mature flowers or siliques.

The protein localises to the nucleus. Functionally, transcription factor positively regulating indolic glucosinolate biosynthetic pathway genes. The protein is Transcription factor MYB51 (MYB51) of Arabidopsis thaliana (Mouse-ear cress).